The chain runs to 511 residues: MIEVVLNPGEVSLSDWKAVYRGAPARLNESAGPVIAQSAAAVERILAKGAPVYGINTGFGKLASVRIGDADLETLQRNIVLSHAAGTGAPSPVAVIRLMMALKLASLAQGASGVRPATTDLLEAMIVKGLTPVVPCQGSVGASGDLAPLAHMAATMIGVGEIFVEGQRLPAVQALMEAGLKPLTLGPKEGLALLNGTQFSTANALAALFDAERLFQSALVTGALATEAAKGSDTPFDPRIHTLRRQPGQIETAAALRALMAGSAIRDSHREGDTRVQDPYCLRCQPQVMGAALDILRQAAVTLSTEANGVSDNPLIFPDTDEALSGGNFHAEPVAFAADIIALAVCEIGSIAERRIAMLVDPACSGLPAFLTPKPGLNSGFMIPQVTAAALVSENKQKAYPASVDSIPTSANQEDHVSMAAHGARRLLAMVEAAEAVIGIELLAAVQGCDFHAPLASSPALESVRGLLRAQVPHLSDDRHFHPDMEAANALVRSGAVVAAASSVELPGVEG.

The 5-imidazolinone (Ala-Gly) cross-link spans 142–144 (ASG). 2,3-didehydroalanine (Ser) is present on Ser-143.

Belongs to the PAL/histidase family. Contains an active site 4-methylidene-imidazol-5-one (MIO), which is formed autocatalytically by cyclization and dehydration of residues Ala-Ser-Gly.

The protein localises to the cytoplasm. It catalyses the reaction L-histidine = trans-urocanate + NH4(+). It participates in amino-acid degradation; L-histidine degradation into L-glutamate; N-formimidoyl-L-glutamate from L-histidine: step 1/3. The polypeptide is Histidine ammonia-lyase (Caulobacter sp. (strain K31)).